Consider the following 31-residue polypeptide: U6-ctenitoxin-Co1a (31 aa).

2 disulfides stabilise this stretch: C2/C18 and C9/C23.

Expressed by the venom gland.

It localises to the secreted. Its function is as follows. Antagonist of L-type calcium channels (Cav1/CACNA1). In Ctenus ornatus (Brazilian spider), this protein is U6-ctenitoxin-Co1a.